Here is a 142-residue protein sequence, read N- to C-terminus: MAKKVIAYIKLQVKAGQASPSPPVGPALGQRGLNIMDFCKAFNAATQKVEQGLPIPVVITAYSDRTFTFITKTPPASILLKKIVGIQSGSKRPNTEKVGKVTRKQLEDIAKTKELDMTAADLDAAVRTIAGSARSMGLVVEG.

Belongs to the universal ribosomal protein uL11 family. In terms of assembly, part of the ribosomal stalk of the 50S ribosomal subunit. Interacts with L10 and the large rRNA to form the base of the stalk. L10 forms an elongated spine to which L12 dimers bind in a sequential fashion forming a multimeric L10(L12)X complex. One or more lysine residues are methylated.

In terms of biological role, forms part of the ribosomal stalk which helps the ribosome interact with GTP-bound translation factors. This is Large ribosomal subunit protein uL11 from Xylella fastidiosa (strain 9a5c).